The primary structure comprises 137 residues: Leaf-specific thionin DB4 (137 aa).

The first 28 residues, 1-28 (MAPSKSIKSVVICVLILGLVLEQVQVEG), serve as a signal peptide directing secretion. Disulfide bonds link cysteine 31–cysteine 68, cysteine 32–cysteine 60, cysteine 40–cysteine 58, and cysteine 44–cysteine 54. A propeptide spans 75–137 (LNLLPESGEP…DGAVIQSVEA (63 aa)) (acidic domain).

This sequence belongs to the plant thionin (TC 1.C.44) family. 4 C-C subfamily.

It localises to the secreted. Functionally, thionins are small plant proteins which are toxic to animal cells. They seem to exert their toxic effect at the level of the cell membrane. Their precise function is not known. The sequence is that of Leaf-specific thionin DB4 (THI1.3) from Hordeum vulgare (Barley).